The chain runs to 70 residues: Small ribosomal subunit protein bS21B (70 aa).

It belongs to the bacterial ribosomal protein bS21 family.

The sequence is that of Small ribosomal subunit protein bS21B from Burkholderia thailandensis (strain ATCC 700388 / DSM 13276 / CCUG 48851 / CIP 106301 / E264).